The following is a 432-amino-acid chain: UDP-N-acetylmuramate--L-alanine ligase (432 aa).

108–114 (GAHGKTS) provides a ligand contact to ATP.

The protein belongs to the MurCDEF family.

The protein resides in the cytoplasm. The catalysed reaction is UDP-N-acetyl-alpha-D-muramate + L-alanine + ATP = UDP-N-acetyl-alpha-D-muramoyl-L-alanine + ADP + phosphate + H(+). Its pathway is cell wall biogenesis; peptidoglycan biosynthesis. Functionally, cell wall formation. The sequence is that of UDP-N-acetylmuramate--L-alanine ligase from Bacillus pumilus (strain SAFR-032).